Here is a 225-residue protein sequence, read N- to C-terminus: Ribose-5-phosphate isomerase A (225 aa).

Substrate is bound by residues threonine 26–threonine 29, aspartate 82–aspartate 85, and lysine 95–glycine 98. Glutamate 104 functions as the Proton acceptor in the catalytic mechanism. Lysine 122 is a substrate binding site.

The protein belongs to the ribose 5-phosphate isomerase family. As to quaternary structure, homodimer.

It catalyses the reaction aldehydo-D-ribose 5-phosphate = D-ribulose 5-phosphate. The protein operates within carbohydrate degradation; pentose phosphate pathway; D-ribose 5-phosphate from D-ribulose 5-phosphate (non-oxidative stage): step 1/1. Its function is as follows. Catalyzes the reversible conversion of ribose-5-phosphate to ribulose 5-phosphate. The polypeptide is Ribose-5-phosphate isomerase A (Streptococcus mutans serotype c (strain ATCC 700610 / UA159)).